Reading from the N-terminus, the 132-residue chain is UPF0146 protein PF0123 (132 aa).

It belongs to the UPF0146 family.

The protein is UPF0146 protein PF0123 of Pyrococcus furiosus (strain ATCC 43587 / DSM 3638 / JCM 8422 / Vc1).